A 617-amino-acid polypeptide reads, in one-letter code: Proline--tRNA ligase (617 aa).

This sequence belongs to the class-II aminoacyl-tRNA synthetase family. ProS type 1 subfamily. In terms of assembly, homodimer.

The protein resides in the cytoplasm. It carries out the reaction tRNA(Pro) + L-proline + ATP = L-prolyl-tRNA(Pro) + AMP + diphosphate. In terms of biological role, catalyzes the attachment of proline to tRNA(Pro) in a two-step reaction: proline is first activated by ATP to form Pro-AMP and then transferred to the acceptor end of tRNA(Pro). As ProRS can inadvertently accommodate and process non-cognate amino acids such as alanine and cysteine, to avoid such errors it has two additional distinct editing activities against alanine. One activity is designated as 'pretransfer' editing and involves the tRNA(Pro)-independent hydrolysis of activated Ala-AMP. The other activity is designated 'posttransfer' editing and involves deacylation of mischarged Ala-tRNA(Pro). The misacylated Cys-tRNA(Pro) is not edited by ProRS. The protein is Proline--tRNA ligase of Streptococcus pneumoniae (strain 70585).